We begin with the raw amino-acid sequence, 1019 residues long: Macrophage colony-stimulating factor 1 receptor 2 (1019 aa).

The N-terminal stretch at 1–18 is a signal peptide; that stretch reads MKSYCLLLSITLSCCCSA. At 19 to 576 the chain is on the extracellular side; that stretch reads EDLPDPPSIH…LREHNSAFMS (558 aa). 3 consecutive Ig-like C2-type domains span residues 37-109, 106-212, and 224-312; these read QAEA…IHLY, IHLY…LLVA, and QNKA…LIVL. Cysteines 52 and 92 form a disulfide. Asn96, Asn148, Asn169, Asn249, Asn342, Asn346, Asn355, Asn369, Asn379, Asn408, Asn422, Asn429, Asn433, and Asn514 each carry an N-linked (GlcNAc...) asparagine glycan. 2 disulfides stabilise this stretch: Cys139/Cys193 and Cys239/Cys294. Ig-like C2-type domains lie at 383–474 and 487–567; these read STTV…LRIY and TLTC…VFHL. Cysteines 490 and 552 form a disulfide. The chain crosses the membrane as a helical span at residues 577-597; sequence ALIGAGSTAAILFLLLLVVFY. Residues 598-1019 lie on the Cytoplasmic side of the membrane; sequence KWRQKPKYEI…LSVTNIYQLS (422 aa). The tract at residues 601–633 is regulatory juxtamembrane domain; sequence QKPKYEIRWKIIESTEGNHYTFVDPTLLPYNYK. Tyr620 carries the phosphotyrosine; by autocatalysis modification. Residues 641 to 963 enclose the Protein kinase domain; that stretch reads LRLGAVLGSG…MICQLIDRLL (323 aa). Residues 647–655 and Lys674 contribute to the ATP site; that span reads LGSGAFGKV. Tyr756 and Tyr778 each carry phosphotyrosine; by autocatalysis. Asp827 serves as the catalytic Proton acceptor. Residues 845 to 867 are activation loop; that stretch reads DFGLARDIQNDDSYIVQGNARLP. Phosphotyrosine; by autocatalysis is present on residues Tyr858 and Tyr974. Positions 970-1001 are disordered; that stretch reads NHQSYSNINETKKDDFKGGKSQRRGEEEEQRR. Residues 979–1001 are compositionally biased toward basic and acidic residues; it reads ETKKDDFKGGKSQRRGEEEEQRR. Tyr1016 bears the Phosphotyrosine; by autocatalysis mark.

It belongs to the protein kinase superfamily. Tyr protein kinase family. CSF-1/PDGF receptor subfamily. As to quaternary structure, monomer. Homodimer. Interacts with CSF1. In terms of processing, autophosphorylated in response to CSF1 binding. autophosphorylation, leading to its degradation. Post-translationally, ubiquitinated. Becomes rapidly polyubiquitinated after autophosphorylation, leading to its degradation.

Its subcellular location is the cell membrane. The catalysed reaction is L-tyrosyl-[protein] + ATP = O-phospho-L-tyrosyl-[protein] + ADP + H(+). Present in an inactive conformation in the absence of bound ligand. CSF1 binding leads to dimerization and activation by autophosphorylation on tyrosine residues. In terms of biological role, tyrosine-protein kinase that acts as a cell-surface receptor for CSF1 and plays an essential role in the regulation of survival, proliferation and differentiation of hematopoietic precursor cells, especially mononuclear phagocytes, such as macrophages and monocytes. Plays an important role in innate immunity and in inflammatory processes. Plays an important role in the regulation of osteoclast proliferation and differentiation, the regulation of bone resorption, and is required for normal bone development. Promotes reorganization of the actin cytoskeleton, regulates formation of membrane ruffles, cell adhesion and cell migration. Activates several signaling pathways in response to ligand binding. The polypeptide is Macrophage colony-stimulating factor 1 receptor 2 (csf1r2) (Takifugu rubripes (Japanese pufferfish)).